We begin with the raw amino-acid sequence, 2122 residues long: Unique GC organizer UGO (2122 aa).

The next 5 helical transmembrane spans lie at 19 to 39, 50 to 70, 82 to 102, 115 to 135, and 145 to 165; these read FAVA…TNSL, LFGM…FVIV, TYIM…MQLI, VLTF…VLIG, and VVCS…DVGL. Disordered regions lie at residues 337 to 403, 422 to 532, 565 to 591, 627 to 762, 785 to 815, 848 to 870, 903 to 949, 999 to 1046, 1068 to 1308, 1328 to 1368, 1515 to 1540, 1560 to 1608, and 1639 to 1727; these read AALH…HRSA, FRGL…GPFV, DLRE…SGLQ, HRRG…GRAN, HAAS…CSAS, MSRR…RAER, SKEG…ASAN, RNET…LHSR, PSDL…HEAV, AGLS…SEEE, ANSS…AASA, AAEH…TPHT, and QGLG…TFFG. Positions 363–374 are enriched in polar residues; the sequence is RSNTLRGCSGQV. 3 stretches are compositionally biased toward basic and acidic residues: residues 503–525, 565–585, and 632–645; these read LRMD…DPAK, DLRE…HAAA, and GARD…RGEP. The segment covering 672 to 687 has biased composition (basic residues); it reads RLSRSRRHKTRTYRRG. Residues 690–699 show a composition bias toward low complexity; sequence SDGTTAGTSD. The span at 707 to 720 shows a compositional bias: acidic residues; it reads LEDEGSDSGQESES. The span at 725-735 shows a compositional bias: basic residues; it reads RRRMRSSRNRR. The segment covering 741 to 750 has biased composition (low complexity); the sequence is EDSSSGTSVR. Residues 751–760 show a composition bias toward basic and acidic residues; that stretch reads SEGRHCREGR. Asn762 carries an N-linked (GlcNAc...) asparagine glycan. Over residues 848 to 860 the composition is skewed to basic residues; the sequence is MSRRRRREGKSRP. Composition is skewed to polar residues over residues 999–1011 and 1072–1097; these read RNET…SPAT and SLFT…SARI. Residue Asn1000 is glycosylated (N-linked (GlcNAc...) asparagine). Residue Asn1165 is glycosylated (N-linked (GlcNAc...) asparagine). A compositionally biased stretch (basic and acidic residues) spans 1220–1261; that stretch reads SREDLVGEADSHVSPEKEVFVSSRREKREEQVPRSRREERRD. The segment covering 1262-1276 has biased composition (basic residues); the sequence is RRGRRWRRGRRRRKA. Composition is skewed to basic and acidic residues over residues 1277–1289 and 1345–1359; these read RECS…RDSS and GDMR…HSDG. A compositionally biased stretch (polar residues) spans 1515–1527; the sequence is ANSSTAVSSSLPD. Asn1516 carries an N-linked (GlcNAc...) asparagine glycan. 2 stretches are compositionally biased toward low complexity: residues 1528-1540 and 1597-1608; these read STAW…AASA and TQTPQTPQTPHT. Over residues 1684–1693 the composition is skewed to polar residues; the sequence is LSATPSTRLQ. Helical transmembrane passes span 1859–1879, 1956–1976, 1989–2009, 2017–2037, and 2040–2060; these read VAWL…LLRL, MLAL…WHLI, IIPA…ILAV, IFLL…PPGV, and VQLF…GQLF. The disordered stretch occupies residues 2102 to 2122; the sequence is DEGSEDEVSMGSGHLVGDRSA.

As to quaternary structure, interacts with guanylate cyclase GC; the interaction regulates guanylate cyclase GC trafficking and catalytic activity.

It localises to the cell membrane. Its function is as follows. In tachyzoites, required for the cellular trafficking of guanylate cyclase GC to the cell membrane and for GC guanylate cyclase activity. The chain is Unique GC organizer UGO from Toxoplasma gondii (strain ATCC 50853 / GT1).